Consider the following 152-residue polypeptide: UPF0225 protein YchJ (152 aa).

It belongs to the UPF0225 family.

This Shigella flexneri serotype 5b (strain 8401) protein is UPF0225 protein YchJ.